The following is a 390-amino-acid chain: Succinate--CoA ligase [ADP-forming] subunit beta (390 aa).

The 237-residue stretch at 9-245 folds into the ATP-grasp domain; that stretch reads KHLLKKYNIP…TTQEDEHETM (237 aa). ATP contacts are provided by residues K46, 53 to 55, E99, S102, and E107; that span reads GRG. Mg(2+)-binding residues include N200 and D214. Substrate is bound by residues N265 and 322 to 324; that span reads GIV.

This sequence belongs to the succinate/malate CoA ligase beta subunit family. Heterotetramer of two alpha and two beta subunits. Requires Mg(2+) as cofactor.

The enzyme catalyses succinate + ATP + CoA = succinyl-CoA + ADP + phosphate. The catalysed reaction is GTP + succinate + CoA = succinyl-CoA + GDP + phosphate. The protein operates within carbohydrate metabolism; tricarboxylic acid cycle; succinate from succinyl-CoA (ligase route): step 1/1. Succinyl-CoA synthetase functions in the citric acid cycle (TCA), coupling the hydrolysis of succinyl-CoA to the synthesis of either ATP or GTP and thus represents the only step of substrate-level phosphorylation in the TCA. The beta subunit provides nucleotide specificity of the enzyme and binds the substrate succinate, while the binding sites for coenzyme A and phosphate are found in the alpha subunit. This Coxiella burnetii (strain RSA 331 / Henzerling II) protein is Succinate--CoA ligase [ADP-forming] subunit beta.